Reading from the N-terminus, the 226-residue chain is MADVLNALEEKVVELQQSESVEVIKRHFREFRKIWETARVELEYSSIQLDSVLRYEKAVQEYIRLNRRYRNKIASGEPWLPIAQEIGKIVDEEEITSPSDGSLQKRSMDNSGSWQSDDIYLTSASQVTAAMRDIHAQMVQAVDMSAENAMELSSSTNLLETLQEKYFGVEDVLYTSKRIIKSLKLSDRSDYFLVVSGFGFFIFVVVYLLFKRIVWPILSMFLWFLR.

Over 1 to 189 (MADVLNALEE…IKSLKLSDRS (189 aa)) the chain is Cytoplasmic. The stretch at 53 to 75 (LRYEKAVQEYIRLNRRYRNKIAS) forms a coiled coil. Ser-97 is subject to Phosphoserine. Residues 190-210 (DYFLVVSGFGFFIFVVVYLLF) form a helical; Anchor for type IV membrane protein membrane-spanning segment. Residues 211–226 (KRIVWPILSMFLWFLR) are Lumenal-facing.

It belongs to the SEC20 family. Component of a SNARE complex consisting of ufe1, sec20, sec22 and use1. Interacts with tip20 through its cytoplasmic domain.

It localises to the endoplasmic reticulum membrane. SNARE required for targeting and fusion of Golgi-derived retrograde transport vesicles with the ER. This Schizosaccharomyces pombe (strain 972 / ATCC 24843) (Fission yeast) protein is Protein transport protein sec20.